Consider the following 1386-residue polypeptide: X-linked retinitis pigmentosa GTPase regulator homolog (1386 aa).

Disordered stretches follow at residues 1-25 (MFFK…TSSE), 37-56 (AGAR…KARR), and 730-760 (MPQM…PEQH). Residues 9 to 25 (SRKTSANSSSDTSTSSE) show a composition bias toward low complexity. Residues 45-56 (SVHRQSGKKARR) are compositionally biased toward basic residues. 4 RCC1 repeats span residues 737 to 787 (SKRS…VLSS), 788 to 838 (SGQL…FICS), 839 to 891 (DGSL…VLTD), and 893 to 943 (GRVL…CITE). A disordered region spans residues 972 to 994 (LKNTEDPSSPSPSTNGSTPRVNL). 2 RCC1 repeats span residues 1034 to 1085 (EGTL…ASTD) and 1087 to 1139 (GSVF…FVQK).

Its function is as follows. Could be a guanine-nucleotide releasing factor for glo-1. May play a role in gut granule biogenesis. Regulates axon termination in PLM and ALM neurons. The protein is X-linked retinitis pigmentosa GTPase regulator homolog (glo-4) of Caenorhabditis elegans.